Reading from the N-terminus, the 253-residue chain is Imidazole glycerol phosphate synthase subunit HisF (253 aa).

Active-site residues include aspartate 11 and aspartate 130.

It belongs to the HisA/HisF family. As to quaternary structure, heterodimer of HisH and HisF.

Its subcellular location is the cytoplasm. The enzyme catalyses 5-[(5-phospho-1-deoxy-D-ribulos-1-ylimino)methylamino]-1-(5-phospho-beta-D-ribosyl)imidazole-4-carboxamide + L-glutamine = D-erythro-1-(imidazol-4-yl)glycerol 3-phosphate + 5-amino-1-(5-phospho-beta-D-ribosyl)imidazole-4-carboxamide + L-glutamate + H(+). It participates in amino-acid biosynthesis; L-histidine biosynthesis; L-histidine from 5-phospho-alpha-D-ribose 1-diphosphate: step 5/9. IGPS catalyzes the conversion of PRFAR and glutamine to IGP, AICAR and glutamate. The HisF subunit catalyzes the cyclization activity that produces IGP and AICAR from PRFAR using the ammonia provided by the HisH subunit. This is Imidazole glycerol phosphate synthase subunit HisF from Cereibacter sphaeroides (strain ATCC 17025 / ATH 2.4.3) (Rhodobacter sphaeroides).